A 602-amino-acid polypeptide reads, in one-letter code: Histone-arginine methyltransferase CARM1 (602 aa).

In terms of domain architecture, SAM-dependent MTase PRMT-type spans 117 to 424; it reads AVQYFQFYGY…KKQSYDISIV (308 aa). Residues Q130, R139, G163, E185, E214, and S242 each coordinate S-adenosyl-L-methionine. The tract at residues 470 to 602 is transactivation domain; sequence TGGAYTMNTG…ITTNTMHYGS (133 aa).

The protein belongs to the class I-like SAM-binding methyltransferase superfamily. Protein arginine N-methyltransferase family. Homodimer.

It localises to the nucleus. It is found in the cytoplasm. The protein localises to the chromosome. The catalysed reaction is L-arginyl-[protein] + 2 S-adenosyl-L-methionine = N(omega),N(omega)-dimethyl-L-arginyl-[protein] + 2 S-adenosyl-L-homocysteine + 2 H(+). In terms of biological role, methylates (mono- and asymmetric dimethylation) the guanidino nitrogens of arginyl residues in several proteins involved in DNA packaging, transcription regulation, pre-mRNA splicing, and mRNA stability. Recruited to promoters upon gene activation together with histone acetyltransferases from EP300/P300 and p160 families, methylates histone H3 at 'Arg-17' (H3R17me) and activates transcription via chromatin remodeling. This is Histone-arginine methyltransferase CARM1 (carm1) from Xenopus laevis (African clawed frog).